Here is a 176-residue protein sequence, read N- to C-terminus: MLSVMVSSSLVLIVFFLGASEEAKPATTTTIKNTKPQCRPEDYATRLQDLRVTFHRVKPTLQREDDYSVWLDGTVVKGCWGCSVMDWLLRRYLEIVFPAGDHVYPGLKTELHSMRSTLESIYKDMRQCPLLGCGDKSVISRLSQEAERKSDNGTRKGLSELDTLFSRLEEYLHSRK.

The N-terminal stretch at 1 to 25 (MLSVMVSSSLVLIVFFLGASEEAKP) is a signal peptide. Cystine bridges form between Cys38/Cys128 and Cys82/Cys133. N-linked (GlcNAc...) asparagine; by host glycosylation occurs at Asn152.

The protein belongs to the IL-10 family. In terms of assembly, homodimer; disulfide-linked.

The protein localises to the secreted. Functional viral IL-10 homolog. Can bind to the human IL-10 receptor and compete with human IL-10 for binding sites. Requires both subunits of the human IL-10 receptor complex to induce signal transduction events and biological activities. IL-10 signaling pathway has several immunosuppressive activities that are exploited by the virus. Inhibits TLR-induced type I interferon production in host plasmacytoid dendritic cells. This Homo sapiens (Human) protein is Viral interleukin-10 homolog (UL111A).